Reading from the N-terminus, the 135-residue chain is PTS system sorbose-specific EIIA component (135 aa).

The 131-residue stretch at 1–131 (MVHAIFCAHG…CVVWQQPETV (131 aa)) folds into the PTS EIIA type-4 domain. The active-site Tele-phosphohistidine intermediate is the histidine 9. Phosphohistidine; by HPr is present on histidine 9.

It is found in the cytoplasm. In terms of biological role, the phosphoenolpyruvate-dependent sugar phosphotransferase system (PTS), a major carbohydrate active transport system, catalyzes the phosphorylation of incoming sugar substrates concomitant with their translocation across the cell membrane. The enzyme II SorABFM PTS system is involved in L-sorbose transport. The polypeptide is PTS system sorbose-specific EIIA component (Klebsiella pneumoniae).